We begin with the raw amino-acid sequence, 133 residues long: Ribosome-binding factor A (133 aa).

Belongs to the RbfA family. In terms of assembly, monomer. Binds 30S ribosomal subunits, but not 50S ribosomal subunits or 70S ribosomes.

Its subcellular location is the cytoplasm. One of several proteins that assist in the late maturation steps of the functional core of the 30S ribosomal subunit. Associates with free 30S ribosomal subunits (but not with 30S subunits that are part of 70S ribosomes or polysomes). Required for efficient processing of 16S rRNA. May interact with the 5'-terminal helix region of 16S rRNA. This Acinetobacter baylyi (strain ATCC 33305 / BD413 / ADP1) protein is Ribosome-binding factor A.